The following is a 131-amino-acid chain: Lysosomal enzyme trafficking factor (131 aa).

Helical transmembrane passes span 8–28 (MGWI…YYVF) and 66–86 (LPFW…FLFL).

This sequence belongs to the LYSET family.

Its subcellular location is the golgi apparatus membrane. In terms of biological role, required for mannose-6-phosphate-dependent trafficking of lysosomal enzymes. LYSET bridges GlcNAc-1-phosphate transferase (GNPTAB), to the membrane-bound transcription factor site-1 protease (MBTPS1), thus allowing proteolytic activation of the GNPTAB. GNPTAB is involved in the regulation of M6P-dependent Golgi-to-lysosome trafficking of lysosomal enzymes. LYSET is thus an essential factor for maturation and delivery of lysosomal hydrolases. The chain is Lysosomal enzyme trafficking factor (lyset-a) from Xenopus laevis (African clawed frog).